The primary structure comprises 183 residues: 3-hydroxydecanoyl-[acyl-carrier-protein] dehydratase (183 aa).

Residue His-77 is part of the active site.

Belongs to the thioester dehydratase family. FabA subfamily. In terms of assembly, homodimer.

It localises to the cytoplasm. The catalysed reaction is a (3R)-hydroxyacyl-[ACP] = a (2E)-enoyl-[ACP] + H2O. It carries out the reaction (3R)-hydroxydecanoyl-[ACP] = (2E)-decenoyl-[ACP] + H2O. It catalyses the reaction (2E)-decenoyl-[ACP] = (3Z)-decenoyl-[ACP]. It functions in the pathway lipid metabolism; fatty acid biosynthesis. Functionally, necessary for the introduction of cis unsaturation into fatty acids. Catalyzes the dehydration of (3R)-3-hydroxydecanoyl-ACP to E-(2)-decenoyl-ACP and then its isomerization to Z-(3)-decenoyl-ACP. Can catalyze the dehydratase reaction for beta-hydroxyacyl-ACPs with saturated chain lengths up to 16:0, being most active on intermediate chain length. This is 3-hydroxydecanoyl-[acyl-carrier-protein] dehydratase from Hahella chejuensis (strain KCTC 2396).